The following is a 157-amino-acid chain: SsrA-binding protein (157 aa).

The protein belongs to the SmpB family.

The protein resides in the cytoplasm. In terms of biological role, required for rescue of stalled ribosomes mediated by trans-translation. Binds to transfer-messenger RNA (tmRNA), required for stable association of tmRNA with ribosomes. tmRNA and SmpB together mimic tRNA shape, replacing the anticodon stem-loop with SmpB. tmRNA is encoded by the ssrA gene; the 2 termini fold to resemble tRNA(Ala) and it encodes a 'tag peptide', a short internal open reading frame. During trans-translation Ala-aminoacylated tmRNA acts like a tRNA, entering the A-site of stalled ribosomes, displacing the stalled mRNA. The ribosome then switches to translate the ORF on the tmRNA; the nascent peptide is terminated with the 'tag peptide' encoded by the tmRNA and targeted for degradation. The ribosome is freed to recommence translation, which seems to be the essential function of trans-translation. The chain is SsrA-binding protein from Chromohalobacter salexigens (strain ATCC BAA-138 / DSM 3043 / CIP 106854 / NCIMB 13768 / 1H11).